The primary structure comprises 151 residues: Chaperonin GroEL (151 aa).

An ATP-binding site is contributed by 41-45 (DGTTT).

Belongs to the chaperonin (HSP60) family. As to quaternary structure, forms a cylinder of 14 subunits composed of two heptameric rings stacked back-to-back. Interacts with the co-chaperonin GroES.

The protein resides in the cytoplasm. It carries out the reaction ATP + H2O + a folded polypeptide = ADP + phosphate + an unfolded polypeptide.. In terms of biological role, together with its co-chaperonin GroES, plays an essential role in assisting protein folding. The GroEL-GroES system forms a nano-cage that allows encapsulation of the non-native substrate proteins and provides a physical environment optimized to promote and accelerate protein folding. The polypeptide is Chaperonin GroEL (Mycobacterium marinum).